A 274-amino-acid polypeptide reads, in one-letter code: Large ribosomal subunit protein uL2 (274 aa).

A disordered region spans residues 224–274 (VAMNPVDHPHGGGEGRTSGGRHPVTPWGIPTKGYKTRRNKRSNKLIVQKRK). A compositionally biased stretch (basic residues) spans 257–274 (YKTRRNKRSNKLIVQKRK).

Belongs to the universal ribosomal protein uL2 family. As to quaternary structure, part of the 50S ribosomal subunit. Forms a bridge to the 30S subunit in the 70S ribosome.

Functionally, one of the primary rRNA binding proteins. Required for association of the 30S and 50S subunits to form the 70S ribosome, for tRNA binding and peptide bond formation. It has been suggested to have peptidyltransferase activity; this is somewhat controversial. Makes several contacts with the 16S rRNA in the 70S ribosome. The chain is Large ribosomal subunit protein uL2 from Francisella tularensis subsp. holarctica (strain FTNF002-00 / FTA).